The chain runs to 89 residues: Small ribosomal subunit protein uS15 (89 aa).

Belongs to the universal ribosomal protein uS15 family. In terms of assembly, part of the 30S ribosomal subunit. Forms a bridge to the 50S subunit in the 70S ribosome, contacting the 23S rRNA.

Its function is as follows. One of the primary rRNA binding proteins, it binds directly to 16S rRNA where it helps nucleate assembly of the platform of the 30S subunit by binding and bridging several RNA helices of the 16S rRNA. In terms of biological role, forms an intersubunit bridge (bridge B4) with the 23S rRNA of the 50S subunit in the ribosome. This Staphylococcus epidermidis (strain ATCC 12228 / FDA PCI 1200) protein is Small ribosomal subunit protein uS15.